The primary structure comprises 67 residues: Protein LITTLE ZIPPER 3 (67 aa).

The stretch at 14 to 59 (YIMKENERLRKKAELLNQENQQLLFQLKQKLSKTKNSNNGSNNDNK) forms a coiled coil. The tract at residues 42–67 (QKLSKTKNSNNGSNNDNKSSSASGQS) is disordered.

As to quaternary structure, interacts with REV. Interacts with ATBH-8, ATBH-9, ATB-14 and ATB-15. As to expression, expressed in the adaxial epidermis of the cotyledons and leaves, and in the vascular cylinder of wild-type torpedo stage embryos. Confined in the central zone and the organizing center in the shoot apical meristem.

The protein resides in the nucleus. In terms of biological role, competitive inhibitor of the HD-ZIPIII transcription factors in shoot apical meristem (SAM) development. Acts by forming non-functional heterodimers. Part of a negative feedback loop. Involved in SAM development and lateral organ patterning. Essential for proper functioning of stem cells in the SAM. The polypeptide is Protein LITTLE ZIPPER 3 (Arabidopsis thaliana (Mouse-ear cress)).